The sequence spans 451 residues: UDP-glycosyltransferase 76C4 (451 aa).

UDP-alpha-D-glucose contacts are provided by residues Ser-273, 332–334, 349–357, and 371–374; these read APQ, HNGWNSTVE, and RWDQ.

This sequence belongs to the UDP-glycosyltransferase family.

The sequence is that of UDP-glycosyltransferase 76C4 (UGT76C4) from Arabidopsis thaliana (Mouse-ear cress).